The sequence spans 1863 residues: Calcineurin-binding protein 1 (1863 aa).

3 TPR repeats span residues 30–65, 81–116, and 118–150; these read LSQT…ITNS, FLAL…DAKD, and VLWN…SPNN. The interval 315-361 is disordered; it reads ERESGGSVKEKEPVFSEEHPQERRSTRLERLRNQKPEKEGLEFDNSK. TPR repeat units follow at residues 543–576, 602–637, 866–900, 955–988, 990–1009, 1011–1031, 1143–1183, 1226–1263, 1264–1297, 1306–1339, 1377–1412, and 1508–1541; these read ARYF…LGRE, IHEI…LAPL, INSP…EKNE, QCFF…DYQT, EQCV…SSRT, LVKL…PPDD, FESW…SQRV, VPFY…RQDW, SHAF…NPSA, ASRL…KDTA, EGVW…LAQG, and NSLR…SMSR. Residues 894-923 are compositionally biased toward basic and acidic residues; it reads VHVEKNENNKTESKKDGSEEQVGYREKEQS. Residues 894–941 are disordered; sequence VHVEKNENNKTESKKDGSEEQVGYREKEQSEQQSKQIPEHTEEVAEEE. Positions 1813–1840 are disordered; the sequence is KMKRGASTSSVVPSVQSGGTSEPEPAPK. Over residues 1818-1832 the composition is skewed to polar residues; sequence ASTSSVVPSVQSGGT.

In terms of assembly, component of the HIRA complex made of UBN1, UBN2, ASF1A, CABIN1 and HIRA. Expressed at low levels in seedlings.

The protein resides in the nucleus. Its function is as follows. May be required for replication-independent chromatin assembly. The polypeptide is Calcineurin-binding protein 1 (Arabidopsis thaliana (Mouse-ear cress)).